A 136-amino-acid polypeptide reads, in one-letter code: Large ribosomal subunit protein uL13 (136 aa).

Belongs to the universal ribosomal protein uL13 family. Part of the 50S ribosomal subunit.

This protein is one of the early assembly proteins of the 50S ribosomal subunit, although it is not seen to bind rRNA by itself. It is important during the early stages of 50S assembly. This is Large ribosomal subunit protein uL13 from Thermoplasma volcanium (strain ATCC 51530 / DSM 4299 / JCM 9571 / NBRC 15438 / GSS1).